The sequence spans 398 residues: Phosphoglycerate kinase (398 aa).

Residues 21 to 23 (DFN), arginine 36, 59 to 62 (HLGR), arginine 119, and arginine 157 each bind substrate. ATP is bound by residues lysine 208, glycine 296, glutamate 327, and 354 to 357 (GGDS).

This sequence belongs to the phosphoglycerate kinase family. As to quaternary structure, monomer.

Its subcellular location is the cytoplasm. It catalyses the reaction (2R)-3-phosphoglycerate + ATP = (2R)-3-phospho-glyceroyl phosphate + ADP. Its pathway is carbohydrate degradation; glycolysis; pyruvate from D-glyceraldehyde 3-phosphate: step 2/5. The polypeptide is Phosphoglycerate kinase (Streptococcus pyogenes serotype M5 (strain Manfredo)).